A 154-amino-acid polypeptide reads, in one-letter code: Endoribonuclease YbeY (154 aa).

Positions 114, 118, and 124 each coordinate Zn(2+).

The protein belongs to the endoribonuclease YbeY family. Zn(2+) serves as cofactor.

The protein resides in the cytoplasm. Its function is as follows. Single strand-specific metallo-endoribonuclease involved in late-stage 70S ribosome quality control and in maturation of the 3' terminus of the 16S rRNA. The protein is Endoribonuclease YbeY of Haemophilus influenzae (strain PittEE).